The primary structure comprises 58 residues: MRFRIRKCPSCGRYTLKETCPVCGTKTKIAHPPRFSPEDPYGEYRRRLKREQLGIVKR.

Belongs to the NOP10 family.

Involved in ribosome biogenesis; more specifically in 18S rRNA pseudouridylation and in cleavage of pre-rRNA. The polypeptide is Ribosome biogenesis protein Nop10 (Thermococcus onnurineus (strain NA1)).